Consider the following 158-residue polypeptide: Rhombotin-2 (158 aa).

LIM zinc-binding domains follow at residues 30–89 (CGGC…RLFG) and 94–153 (CASC…EWTK).

In terms of assembly, interacts via its LIM domains with ELF2 and LDB1. Interacts with BEX2 and KDM5A. Also interacts with basic helix-loop-helix protein TAL1/SCL and can assemble in a complex with LMO2 and TAL1/SCL.

The protein resides in the nucleus. In terms of biological role, acts with TAL1/SCL to regulate red blood cell development. Also acts with LDB1 to maintain erythroid precursors in an immature state. The chain is Rhombotin-2 (LMO2) from Bos taurus (Bovine).